Consider the following 293-residue polypeptide: Forkhead box protein N5 (293 aa).

Residues 104 to 152 are disordered; that stretch reads TSPPLQLQRQLSNDYSTVEDSEDEAPTSCSDVLTDDDDSYNPWQPKHKR. A compositionally biased stretch (polar residues) spans 106-119; it reads PPLQLQRQLSNDYS. The fork-head DNA-binding region spans 176 to 273; that stretch reads RPPLNYCNLI…NEMHALSDDL (98 aa).

It is found in the nucleus. The protein is Forkhead box protein N5 of Xenopus tropicalis (Western clawed frog).